We begin with the raw amino-acid sequence, 304 residues long: tRNA-uridine aminocarboxypropyltransferase 1 (304 aa).

Residues 1–30 (MALSPSVVPQESEENNANCVETKQSQTAST) are disordered. A compositionally biased stretch (polar residues) spans 15–30 (NNANCVETKQSQTAST). The short motif at 206-209 (DSTW) is the DXTW element.

This sequence belongs to the TDD superfamily. DTWD1 family.

It is found in the nucleus. The enzyme catalyses a uridine in tRNA + S-adenosyl-L-methionine = a 3-[(3S)-3-amino-3-carboxypropyl]uridine in tRNA + S-methyl-5'-thioadenosine + H(+). Functionally, catalyzes the formation of 3-(3-amino-3-carboxypropyl)uridine (acp3U) at position 20 in the D-loop of several cytoplasmic tRNAs (acp3U(20)). The protein is tRNA-uridine aminocarboxypropyltransferase 1 of Rattus norvegicus (Rat).